Reading from the N-terminus, the 237-residue chain is Apoptosis regulator OPG045 (237 aa).

It belongs to the orthopoxvirus OPG045 family. In terms of assembly, interacts with host BAK1, BAX and BID.

It localises to the host mitochondrion outer membrane. It is found in the host cytoplasm. Plays a role in the inhibition of host apoptosis. Interacts with host BAX and thereby inhibits its activity. The protein is Apoptosis regulator OPG045 (OPG045) of Homo sapiens (Human).